The following is a 246-amino-acid chain: Agamous-like MADS-box protein AGL5 (246 aa).

Residues 18 to 72 (RGKIEIKRIENTTNRQVTFCKRRNGLLKKAYELSVLCDAEVALVIFSTRGRLYEY) form the MADS-box domain. The 91-residue stretch at 102–192 (TQYYQQEASK…RSKITERTGL (91 aa)) folds into the K-box domain.

As to quaternary structure, interacts with AGL15 and AGL16.

The protein localises to the nucleus. Probable transcription factor. Interacts genetically with TT16/AGL32 in a partially antagonistic manner during flower development. Is essential for the coordination of cell divisions in ovule, seed coat development and endosperm formation. This chain is Agamous-like MADS-box protein AGL5 (AGL5), found in Arabidopsis thaliana (Mouse-ear cress).